We begin with the raw amino-acid sequence, 119 residues long: Large ribosomal subunit protein uL18 (119 aa).

This sequence belongs to the universal ribosomal protein uL18 family. As to quaternary structure, part of the 50S ribosomal subunit; part of the 5S rRNA/L5/L18/L25 subcomplex. Contacts the 5S and 23S rRNAs.

Its function is as follows. This is one of the proteins that bind and probably mediate the attachment of the 5S RNA into the large ribosomal subunit, where it forms part of the central protuberance. In Solibacter usitatus (strain Ellin6076), this protein is Large ribosomal subunit protein uL18.